The following is a 133-amino-acid chain: Endoribonuclease YbeY (133 aa).

Residues H105, H109, and H115 each coordinate Zn(2+).

It belongs to the endoribonuclease YbeY family. The cofactor is Zn(2+).

Its subcellular location is the cytoplasm. Its function is as follows. Single strand-specific metallo-endoribonuclease involved in late-stage 70S ribosome quality control and in maturation of the 3' terminus of the 16S rRNA. The protein is Endoribonuclease YbeY of Lawsonia intracellularis (strain PHE/MN1-00).